The primary structure comprises 1503 residues: Dynein axonemal assembly factor 1 homolog (1503 aa).

LRR repeat units follow at residues 34-56 (RLND…EEYT), 57-78 (ELKC…EKLG), 79-100 (KLKC…DPCR), 101-122 (ELDT…GTNI), 125-146 (VLNT…SDLI), and 150-171 (TLSV…KIFE). The region spanning 185-223 (PVVSRLPQYRKTLILACKELTYLDSRPVFPRDRACAEAW) is the LRRCT domain. Disordered stretches follow at residues 249 to 280 (SINC…DDTC), 305 to 328 (EQPI…TSSQ), 956 to 1033 (DSGD…DHDE), and 1295 to 1315 (STNN…STSE). Positions 973 to 985 (TESEDYDTAEDEY) are enriched in acidic residues. The segment covering 1014 to 1031 (QKQDKPDTVEEVGKKNDH) has biased composition (basic and acidic residues). Positions 1303–1314 (TKKTLPTKTSTS) are enriched in low complexity.

Belongs to the DNAAF1 family.

The protein resides in the cell projection. It localises to the cilium. In terms of biological role, cilium-specific protein required for cilia structures. In Drosophila erecta (Fruit fly), this protein is Dynein axonemal assembly factor 1 homolog (dtr).